The chain runs to 1538 residues: Lhr helicase/uracil glycosylase (1538 aa).

Residues 1–897 (MADNPDPSSL…ERRASVLSLD (897 aa)) are lhr-Core. ATP-binding residues include Gln34, Lys57, Thr58, Asp179, Glu180, Ile398, Arg415, and His418. The Helicase ATP-binding domain occupies 38–235 (WHVAARSEHA…FLGGDRPVTV (198 aa)). The DEVH box signature appears at 179–182 (DEVH). The Helicase C-terminal domain maps to 284-462 (GILDEVLRHR…NLTPPHNPLD (179 aa)). Residues 463–552 (VLAQQTVAAA…VTSGGTIPDR (90 aa)) form a beta-sheet bundle region. The interval 553 to 623 (GMYSVLLPEG…SARLPFWRGE (71 aa)) is WH domain. The interval 624 to 897 (GNGRPAELGE…ERRASVLSLD (274 aa)) is domain 4. Residues 898–1538 (SELLRNLLGQ…SSSPQGLDWG (641 aa)) form a lhr-CTD region. Residues 1287-1312 (SNARTSTRRSHRARRGRPVYAQPVSP) are disordered. Basic residues predominate over residues 1292 to 1303 (STRRSHRARRGR).

It belongs to the Lhr helicase family. As to quaternary structure, homooligomerizes, probably a homotetramer. The cofactor is Ca(2+). Uracil deglycosylase activity does not require a cofactor. is required as a cofactor.

The enzyme catalyses Couples ATP hydrolysis with the unwinding of duplex DNA by translocating in the 3'-5' direction.. The catalysed reaction is ATP + H2O = ADP + phosphate + H(+). It catalyses the reaction Hydrolyzes single-stranded DNA or mismatched double-stranded DNA and polynucleotides, releasing free uracil.. Functionally, a 3'-5' helicase probably involved in DNA repair. Translocates in an ATP-dependent manner 3'-to-5' on single-stranded (ss)DNA, unwinding any encountered duplex nucleic acid. An RNA:DNA hybrid with a 3'-ssDNA loading strand is a 4.5-fold better helicase substrate than 3'-tailed double-stranded (ds)DNA; substrates where the helicase loads on a 3'-ssRNA tail (DNA:RNA and RNA:RNA) are not unwound. Unlike its M.smegmatis counterpart, the ATPase is not ssDNA-dependent. Forms a clamp around the ssDNA loading strand. In terms of biological role, excises uracil residues from DNA; forked DNA with a dU residue is the best substrate followed by ssDNA. Inactive on dsDNA with a dU residue or DNA with an 8-oxoguanine residue. Uracil residues in DNA can arise as a result of misincorporation of dUMP residues by DNA polymerase or due to deamination of cytosine. The sequence is that of Lhr helicase/uracil glycosylase from Escherichia coli (strain K12).